Reading from the N-terminus, the 166-residue chain is Large ribosomal subunit protein uL18c (166 aa).

A chloroplast-targeting transit peptide spans 1 to 44; sequence MAAATSLSFFHSTLASSSSSSVQQLSLPPKFVNFRPQTLPLIQA.

It belongs to the universal ribosomal protein uL18 family. Component of the chloroplast large ribosomal subunit (LSU). Mature 70S chloroplast ribosomes of higher plants consist of a small (30S) and a large (50S) subunit. The 30S small subunit contains 1 molecule of ribosomal RNA (16S rRNA) and 24 different proteins. The 50S large subunit contains 3 rRNA molecules (23S, 5S and 4.5S rRNA) and 33 different proteins.

The protein resides in the plastid. The protein localises to the chloroplast. Component of the chloroplast ribosome (chloro-ribosome), a dedicated translation machinery responsible for the synthesis of chloroplast genome-encoded proteins, including proteins of the transcription and translation machinery and components of the photosynthetic apparatus. The sequence is that of Large ribosomal subunit protein uL18c (RPL18) from Spinacia oleracea (Spinach).